Here is a 203-residue protein sequence, read N- to C-terminus: Orotate phosphoribosyltransferase (203 aa).

5-phospho-alpha-D-ribose 1-diphosphate contacts are provided by residues R94, K98, H100, and 120-128; that span reads EDLISTGGS. S124 provides a ligand contact to orotate.

It belongs to the purine/pyrimidine phosphoribosyltransferase family. PyrE subfamily. As to quaternary structure, homodimer. Mg(2+) is required as a cofactor.

The enzyme catalyses orotidine 5'-phosphate + diphosphate = orotate + 5-phospho-alpha-D-ribose 1-diphosphate. Its pathway is pyrimidine metabolism; UMP biosynthesis via de novo pathway; UMP from orotate: step 1/2. In terms of biological role, catalyzes the transfer of a ribosyl phosphate group from 5-phosphoribose 1-diphosphate to orotate, leading to the formation of orotidine monophosphate (OMP). This Staphylococcus aureus (strain COL) protein is Orotate phosphoribosyltransferase.